A 144-amino-acid polypeptide reads, in one-letter code: Large ribosomal subunit protein uL11 (144 aa).

It belongs to the universal ribosomal protein uL11 family. As to quaternary structure, part of the ribosomal stalk of the 50S ribosomal subunit. Interacts with L10 and the large rRNA to form the base of the stalk. L10 forms an elongated spine to which L12 dimers bind in a sequential fashion forming a multimeric L10(L12)X complex. In terms of processing, one or more lysine residues are methylated.

Functionally, forms part of the ribosomal stalk which helps the ribosome interact with GTP-bound translation factors. This is Large ribosomal subunit protein uL11 from Deinococcus deserti (strain DSM 17065 / CIP 109153 / LMG 22923 / VCD115).